The chain runs to 153 residues: Transcriptional repressor NrdR (153 aa).

Residues 3-34 fold into a zinc finger; it reads CPSCFHNGTRVLDSRPVDEGRSIRRRRECESC. The region spanning 49 to 139 is the ATP-cone domain; that stretch reads LIVVKKEGTR…VYRQFKDLNV (91 aa).

This sequence belongs to the NrdR family. Zn(2+) serves as cofactor.

Functionally, negatively regulates transcription of bacterial ribonucleotide reductase nrd genes and operons by binding to NrdR-boxes. The sequence is that of Transcriptional repressor NrdR from Bacillus mycoides (strain KBAB4) (Bacillus weihenstephanensis).